A 365-amino-acid polypeptide reads, in one-letter code: uncharacterized protein (365 aa).

Transmembrane regions (helical) follow at residues 105–125, 151–171, and 187–207; these read TGNW…QCWL, ILTT…SLTI, and IFLI…SLIF.

It is found in the cell membrane. This is an uncharacterized protein from Mycoplasma genitalium (strain ATCC 33530 / DSM 19775 / NCTC 10195 / G37) (Mycoplasmoides genitalium).